The chain runs to 293 residues: Bifunctional protein FolD (293 aa).

NADP(+) contacts are provided by residues 166–168 (GRS), Ser-191, and Ile-232.

It belongs to the tetrahydrofolate dehydrogenase/cyclohydrolase family. In terms of assembly, homodimer.

It carries out the reaction (6R)-5,10-methylene-5,6,7,8-tetrahydrofolate + NADP(+) = (6R)-5,10-methenyltetrahydrofolate + NADPH. The catalysed reaction is (6R)-5,10-methenyltetrahydrofolate + H2O = (6R)-10-formyltetrahydrofolate + H(+). It functions in the pathway one-carbon metabolism; tetrahydrofolate interconversion. In terms of biological role, catalyzes the oxidation of 5,10-methylenetetrahydrofolate to 5,10-methenyltetrahydrofolate and then the hydrolysis of 5,10-methenyltetrahydrofolate to 10-formyltetrahydrofolate. This is Bifunctional protein FolD from Synechococcus sp. (strain JA-2-3B'a(2-13)) (Cyanobacteria bacterium Yellowstone B-Prime).